Here is a 110-residue protein sequence, read N- to C-terminus: Envelope glycoprotein N (110 aa).

The signal sequence occupies residues methionine 1–glycine 17. Over histidine 18 to alanine 80 the chain is Virion surface. The segment covering valine 28 to glycine 41 has biased composition (polar residues). The interval valine 28–threonine 51 is disordered. A helical transmembrane segment spans residues leucine 81–phenylalanine 101. The Intravirion portion of the chain corresponds to lysine 102–alanine 110.

The protein belongs to the herpesviridae glycoprotein N family. In terms of assembly, interacts (via N-terminus) with gM (via N-terminus). The gM-gN heterodimer forms the gCII complex. Post-translationally, O-glycosylated. Contains alpha 2,6-sialic acid residues. N-glycosylated.

Its subcellular location is the virion membrane. It localises to the host membrane. It is found in the host Golgi apparatus. The protein localises to the host trans-Golgi network. In terms of biological role, envelope glycoprotein necessary for proper maturation of gM and modulation of its membrane fusion activity. Also plays a critical role in virion morphogenesis. This is Envelope glycoprotein N from Homo sapiens (Human).